Consider the following 193-residue polypeptide: dTTP/UTP pyrophosphatase (193 aa).

The Proton acceptor role is filled by D77.

This sequence belongs to the Maf family. YhdE subfamily. The cofactor is a divalent metal cation.

Its subcellular location is the cytoplasm. It catalyses the reaction dTTP + H2O = dTMP + diphosphate + H(+). The catalysed reaction is UTP + H2O = UMP + diphosphate + H(+). In terms of biological role, nucleoside triphosphate pyrophosphatase that hydrolyzes dTTP and UTP. May have a dual role in cell division arrest and in preventing the incorporation of modified nucleotides into cellular nucleic acids. This Bacteroides fragilis (strain YCH46) protein is dTTP/UTP pyrophosphatase.